We begin with the raw amino-acid sequence, 95 residues long: Secretoglobin family 2A member 2 (95 aa).

The N-terminal stretch at 1 to 18 is a signal peptide; it reads MKLVFLFLLVTIPICCYA. The N-linked (GlcNAc...) asparagine glycan is linked to asparagine 35.

The protein belongs to the secretoglobin family. Lipophilin subfamily. Prostatein is composed of three different peptides called C1, C2 and C3. These form covalent C1:C3 (F) and C2:C3 (S) heterodimers whose non-covalent association forms tetrameric (C1:C3/C3:C2) prostatein molecules. As to expression, highly expressed in ventral prostate.

The protein localises to the secreted. Functionally, part of prostatein which is the major secretory glycoprotein of ventral prostate gland. Steroid-binding protein; can bind non-polar steroids, cholesterol and a group of small proline-rich peptides. In Rattus norvegicus (Rat), this protein is Secretoglobin family 2A member 2 (Scgb2a2).